Consider the following 116-residue polypeptide: Large ribosomal subunit protein uL24 (116 aa).

The protein belongs to the universal ribosomal protein uL24 family. As to quaternary structure, part of the 50S ribosomal subunit.

Its function is as follows. One of two assembly initiator proteins, it binds directly to the 5'-end of the 23S rRNA, where it nucleates assembly of the 50S subunit. Functionally, located at the polypeptide exit tunnel on the outside of the subunit. This chain is Large ribosomal subunit protein uL24, found in Methanosarcina barkeri (strain Fusaro / DSM 804).